Here is a 358-residue protein sequence, read N- to C-terminus: UPF0421 protein BT9727_2513 (358 aa).

Transmembrane regions (helical) follow at residues Ile19 to Val39, Phe74 to Val94, Thr109 to Ile129, and Leu131 to Pro151.

Belongs to the UPF0421 family.

It is found in the cell membrane. This chain is UPF0421 protein BT9727_2513, found in Bacillus thuringiensis subsp. konkukian (strain 97-27).